A 398-amino-acid polypeptide reads, in one-letter code: Aurofusarin biosynthesis regulatory protein aurR1 (398 aa).

Residues cysteine 18–cysteine 45 constitute a DNA-binding region (zn(2)-C6 fungal-type). 2 disordered regions span residues arginine 52–proline 73 and alanine 275–isoleucine 314. 2 stretches are compositionally biased toward basic and acidic residues: residues arginine 56 to glutamine 67 and aspartate 289 to serine 298. Polar residues predominate over residues arginine 299 to serine 311.

The protein localises to the nucleus. In terms of biological role, transcription factor that specifically regulates the expression of the gene cluster that mediates the biosynthesis of aurofusarin, a red mycelium pigment which is acting as a mycotoxin. The sequence is that of Aurofusarin biosynthesis regulatory protein aurR1 from Gibberella zeae (strain ATCC MYA-4620 / CBS 123657 / FGSC 9075 / NRRL 31084 / PH-1) (Wheat head blight fungus).